The sequence spans 63 residues: Bowman-Birk type proteinase inhibitor B-II (63 aa).

Intrachain disulfides connect Cys-5-Cys-62, Cys-6-Cys-23, Cys-9-Cys-57, Cys-11-Cys-21, Cys-30-Cys-37, Cys-34-Cys-49, and Cys-39-Cys-47.

This sequence belongs to the Bowman-Birk serine protease inhibitor family.

This chain is Bowman-Birk type proteinase inhibitor B-II, found in Arachis hypogaea (Peanut).